A 261-amino-acid polypeptide reads, in one-letter code: Hydroxyethylthiazole kinase (261 aa).

Position 38 (methionine 38) interacts with substrate. ATP contacts are provided by arginine 114 and threonine 159. Glycine 186 contributes to the substrate binding site.

Belongs to the Thz kinase family. Mg(2+) is required as a cofactor.

The catalysed reaction is 5-(2-hydroxyethyl)-4-methylthiazole + ATP = 4-methyl-5-(2-phosphooxyethyl)-thiazole + ADP + H(+). It participates in cofactor biosynthesis; thiamine diphosphate biosynthesis; 4-methyl-5-(2-phosphoethyl)-thiazole from 5-(2-hydroxyethyl)-4-methylthiazole: step 1/1. In terms of biological role, catalyzes the phosphorylation of the hydroxyl group of 4-methyl-5-beta-hydroxyethylthiazole (THZ). This Streptococcus suis (strain 05ZYH33) protein is Hydroxyethylthiazole kinase.